The sequence spans 337 residues: Putative carbonic anhydrase-like protein 2 (337 aa).

Residues 1-16 (MIPWLLTACIYPCVIG) form the signal peptide. In terms of domain architecture, Alpha-carbonic anhydrase spans 17–274 (PDFWGLLHGD…LNGRLVRTNI (258 aa)). Y140 is an active-site residue. Residue N188 is glycosylated (N-linked (GlcNAc...) asparagine). 212–213 (TF) serves as a coordination point for substrate.

This sequence belongs to the alpha-carbonic anhydrase family.

It localises to the secreted. This Caenorhabditis elegans protein is Putative carbonic anhydrase-like protein 2 (cah-2).